The sequence spans 140 residues: Small ribosomal subunit protein bS6 (140 aa).

The tract at residues 111 to 140 (EHFTGPAGAEGSDDESTESTDEAVAETADA) is disordered. The segment covering 121–140 (GSDDESTESTDEAVAETADA) has biased composition (acidic residues).

The protein belongs to the bacterial ribosomal protein bS6 family.

Functionally, binds together with bS18 to 16S ribosomal RNA. This Rhodopirellula baltica (strain DSM 10527 / NCIMB 13988 / SH1) protein is Small ribosomal subunit protein bS6.